We begin with the raw amino-acid sequence, 764 residues long: Zygote defective protein 12 (764 aa).

Positions 1–20 (MLDLTNQESDSSENGNSKYA) are enriched in polar residues. A disordered region spans residues 1–33 (MLDLTNQESDSSENGNSKYADSTDGRGIGTSRR). An interaction with dli-1 region spans residues 1-236 (MLDLTNQESD…ESSVITNGNG (236 aa)). Residues 43 to 169 (RKDLADLVFW…VSLAFIGKTQ (127 aa)) form the Calponin-homology (CH) domain. 2 coiled-coil regions span residues 244–405 (LSAN…HVKT) and 436–692 (GLES…NRLI). A helical membrane pass occupies residues 732-752 (ALPWRFGISSMLIIFMVWFFI).

It belongs to the hook family. Homodimer. Interacts with the dynein subunit dli-1 via its N-terminus. May interact with microtubules.

The protein localises to the nucleus membrane. It localises to the cytoplasm. It is found in the cytoskeleton. The protein resides in the microtubule organizing center. Its subcellular location is the centrosome. Cytoskeletal linker protein, which is essential for attachment of the centrosome to the nucleus. Required for dynein localization to the nuclear envelope. This Caenorhabditis briggsae protein is Zygote defective protein 12 (zyg-12).